Reading from the N-terminus, the 95-residue chain is Aspartyl/glutamyl-tRNA(Asn/Gln) amidotransferase subunit C (95 aa).

This sequence belongs to the GatC family. As to quaternary structure, heterotrimer of A, B and C subunits.

The enzyme catalyses L-glutamyl-tRNA(Gln) + L-glutamine + ATP + H2O = L-glutaminyl-tRNA(Gln) + L-glutamate + ADP + phosphate + H(+). The catalysed reaction is L-aspartyl-tRNA(Asn) + L-glutamine + ATP + H2O = L-asparaginyl-tRNA(Asn) + L-glutamate + ADP + phosphate + 2 H(+). Functionally, allows the formation of correctly charged Asn-tRNA(Asn) or Gln-tRNA(Gln) through the transamidation of misacylated Asp-tRNA(Asn) or Glu-tRNA(Gln) in organisms which lack either or both of asparaginyl-tRNA or glutaminyl-tRNA synthetases. The reaction takes place in the presence of glutamine and ATP through an activated phospho-Asp-tRNA(Asn) or phospho-Glu-tRNA(Gln). In Magnetococcus marinus (strain ATCC BAA-1437 / JCM 17883 / MC-1), this protein is Aspartyl/glutamyl-tRNA(Asn/Gln) amidotransferase subunit C.